The chain runs to 306 residues: tRNA pseudouridine synthase B (306 aa).

The Nucleophile role is filled by Asp47.

Belongs to the pseudouridine synthase TruB family. Type 1 subfamily.

The enzyme catalyses uridine(55) in tRNA = pseudouridine(55) in tRNA. In terms of biological role, responsible for synthesis of pseudouridine from uracil-55 in the psi GC loop of transfer RNAs. This chain is tRNA pseudouridine synthase B, found in Neisseria meningitidis serogroup A / serotype 4A (strain DSM 15465 / Z2491).